Consider the following 486-residue polypeptide: Transcriptional adapter 2-beta (486 aa).

The segment at 4 to 59 (LGKKYCVNCLADVTNLRIRCAECQDIELCPECFSAGAEIGNHRRWHGYQQVDGGRF) adopts a ZZ-type zinc-finger fold. Zn(2+) is bound by residues Cys-9, Cys-12, Cys-23, Cys-26, Cys-32, Cys-35, His-45, and His-49. Residues 65-118 (EAEGGWTSREEQSLLDAIEQYGFGNWEDMAAHVGASRTPQEVMDHYVSMYIHGN) form the SANT domain. Disordered stretches follow at residues 237–291 (KKDK…EKGQ) and 343–377 (EYEA…TAGL). 2 stretches are compositionally biased toward gly residues: residues 247–262 (GTVG…GSGS) and 367–377 (SSGGGGGTAGL).

The protein resides in the nucleus. In terms of biological role, transcriptional coactivator. The polypeptide is Transcriptional adapter 2-beta (tada2b) (Danio rerio (Zebrafish)).